Consider the following 455-residue polypeptide: Maintenance of telomere capping protein 1 (455 aa).

Disordered stretches follow at residues 1–113 (MAET…SATP) and 296–317 (AKKMNKENKQENVGAGDDEDAS). The segment covering 27 to 38 (PTSKEFNNDDSK) has biased composition (basic and acidic residues). The span at 80-113 (VAATSNERQQHDASNQPSQAAQTTINKNTESATP) shows a compositional bias: polar residues. Over residues 296 to 305 (AKKMNKENKQ) the composition is skewed to basic and acidic residues.

It belongs to the MTC1 family.

It localises to the cytoplasm. Functionally, involved in telomere capping. The sequence is that of Maintenance of telomere capping protein 1 from Schizosaccharomyces pombe (strain 972 / ATCC 24843) (Fission yeast).